The chain runs to 541 residues: Presenilin homolog (541 aa).

Polar residues-rich tracts occupy residues 1 to 14 and 43 to 52; these read MAAV…SSGL and NNYGSSNQDQ. Disordered regions lie at residues 1–52 and 69–92; these read MAAV…NQDQ and CGSR…NEME. Topologically, residues 1-106 are cytoplasmic; that stretch reads MAAVNLQASC…LKYGAQHVIK (106 aa). The chain crosses the membrane as a helical span at residues 107–127; the sequence is LFVPVSLCMLVVVATINSISF. At 128–154 the chain is on the lumenal side; that stretch reads YNSTDVYLLYTPFHEQSPEPSVKFWSA. The N-linked (GlcNAc...) asparagine glycan is linked to asparagine 129. Residues 155-175 traverse the membrane as a helical segment; it reads LANSLILMSVVVVMTFLLIVL. Residues 176 to 182 lie on the Cytoplasmic side of the membrane; sequence YKKRCYR. Residues 183 to 203 traverse the membrane as a helical segment; it reads IIHGWLILSSFMLLFIFTYLY. The Lumenal portion of the chain corresponds to 204-216; that stretch reads LEELLRAYNIPMD. The chain crosses the membrane as a helical span at residues 217–237; that stretch reads YPTALLIMWNFGVVGMMSIHW. At 238–242 the chain is on the cytoplasmic side; that stretch reads QGPLR. Residues 243-263 traverse the membrane as a helical segment; sequence LQQGYLIFVAALMALVFIKYL. Over 264 to 265 the chain is Lumenal; the sequence is PE. A helical membrane pass occupies residues 266-286; sequence WTAWAVLAAISIWDLIAVLSP. Aspartate 279 is a catalytic residue. Residues 287–453 lie on the Cytoplasmic side of the membrane; sequence RGPLRILVET…QNHPDGQEER (167 aa). Positions 320 to 481 are interaction with Mettl2; that stretch reads NTVTPQQSQA…ASSYGDWTTT (162 aa). Low complexity predominate over residues 327-350; it reads SQATASSSPSSSNSTTTTRATQNS. Disordered stretches follow at residues 327 to 379 and 421 to 449; these read SQAT…DGSV and EVQS…HPDG. 2 stretches are compositionally biased toward polar residues: residues 361 to 370 and 421 to 443; these read GQRTGNSHPR and EVQS…TAPD. A helical membrane pass occupies residues 454-474; that stretch reads GIKLGLGDFIFYSVLVGKASS. Aspartate 461 is a catalytic residue. Residues 475–481 lie on the Lumenal side of the membrane; sequence YGDWTTT. A helical transmembrane segment spans residues 482–502; sequence IACFVAILIGLCLTLLLLAIW. The Cytoplasmic portion of the chain corresponds to 503-506; it reads RKAL. The PAL motif lies at 507-509; that stretch reads PAL. Residues 507–527 constitute an intramembrane region (helical); that stretch reads PALPISITFGLIFCFATSAVV. Topologically, residues 528–541 are cytoplasmic; it reads KPFMEDLSAKQVFI.

This sequence belongs to the peptidase A22A family. In terms of assembly, homodimer. Component of the gamma-secretase complex, a complex composed of a presenilin (Psn) homodimer, nicastrin (Nct), Aph-1 and Pen-2. Interacts with Mettl2. Isoform 2 shows a better interaction with Mettl2 than isoform 1. Post-translationally, cleaved. The cleavage, which probably takes place between the 6th and the 7th transmembrane regions, may be required for activation of the gamma-secretase activity. Maternally expressed in nurse and follicle cells. In early embryos, expressed in all or most cells and later increases in CNS and epidermal tissues. In larvae, expression is seen in all imaginal disks, brain and optic lobes. In pupae, expression is seen in eye disk and brain.

Its subcellular location is the endoplasmic reticulum membrane. The protein resides in the golgi apparatus membrane. Probable catalytic subunit of the gamma-secretase complex, an endoprotease complex that catalyzes the intramembrane cleavage of integral membrane proteins such as Notch receptor. Required for S3 cleavage of Notch, which releases activated Notch protein from the cell membrane. Involved in the patterning of the optic lobes. The polypeptide is Presenilin homolog (Psn) (Drosophila melanogaster (Fruit fly)).